The chain runs to 1007 residues: Kinesin-like protein KIN-7D, chloroplastic (1007 aa).

A chloroplast-targeting transit peptide spans 1-53 (MATRPASRQRRASSAAAAVAVVRSSPQPQQQQQQQLPIPQSGSPTSTTTTTTS). Low complexity predominate over residues 1 to 55 (MATRPASRQRRASSAAAAVAVVRSSPQPQQQQQQQLPIPQSGSPTSTTTTTTSSS). The segment at 1 to 79 (MATRPASRQR…LFAGLDEDPA (79 aa)) is disordered. The Kinesin motor domain occupies 83–402 (NVTVTVRFRP…LKFAHRAKRI (320 aa)). Residue 163–170 (GVTSSGKT) participates in ATP binding. Positions 403–495 (EVQASQNKII…QRLTKLILVS (93 aa)) form a coiled coil. The disordered stretch occupies residues 579–607 (ILTSSEGDKSSLTKSTAPSTPIGESVNFP). Coiled-coil stretches lie at residues 687–716 (NNEKIQMEMKKVNDEIKGKKHQIASLERQI), 754–791 (AADNRVIQDQLNEKTTECMELQEEVAHLKEQLYQTLQA), and 836–907 (SVEI…SVRS). A disordered region spans residues 901–941 (ELASVRSPTPRRANSGLRGTRRDSISRRHEPAPRRDNNAGY). The segment covering 920–941 (TRRDSISRRHEPAPRRDNNAGY) has biased composition (basic and acidic residues). Positions 942 to 982 (EREKALEAVLMEKEQKEAELQRRIEESKQKEAFLESELANM) form a coiled coil.

It belongs to the TRAFAC class myosin-kinesin ATPase superfamily. Kinesin family. KIN-7 subfamily. As to quaternary structure, binds microtubules. Homodimer. The cofactor is Mg(2+).

The protein resides in the plastid. It localises to the chloroplast. Its function is as follows. Probable minus end-directed motor protein with a microtubule-enhanced ATPase activity. Binds ATP/ADP in vitro. Retains total enzymatic activity even after the removal of the ADP bound in the active site. The chain is Kinesin-like protein KIN-7D, chloroplastic from Oryza sativa subsp. japonica (Rice).